The chain runs to 168 residues: G/U mismatch-specific DNA glycosylase (168 aa).

It belongs to the uracil-DNA glycosylase (UDG) superfamily. TDG/mug family. In terms of assembly, binds DNA as a monomer.

The protein localises to the cytoplasm. The enzyme catalyses Specifically hydrolyzes mismatched double-stranded DNA and polynucleotides, releasing free uracil.. Its function is as follows. Excises ethenocytosine and uracil, which can arise by alkylation or deamination of cytosine, respectively, from the corresponding mispairs with guanine in ds-DNA. It is capable of hydrolyzing the carbon-nitrogen bond between the sugar-phosphate backbone of the DNA and the mispaired base. The complementary strand guanine functions in substrate recognition. Required for DNA damage lesion repair in stationary-phase cells. This Salmonella choleraesuis (strain SC-B67) protein is G/U mismatch-specific DNA glycosylase.